A 452-amino-acid chain; its full sequence is Argininosuccinate lyase (452 aa).

The interval Ala-431–Ala-452 is disordered.

It belongs to the lyase 1 family. Argininosuccinate lyase subfamily.

It localises to the cytoplasm. It catalyses the reaction 2-(N(omega)-L-arginino)succinate = fumarate + L-arginine. The protein operates within amino-acid biosynthesis; L-arginine biosynthesis; L-arginine from L-ornithine and carbamoyl phosphate: step 3/3. This chain is Argininosuccinate lyase, found in Tremblaya princeps.